We begin with the raw amino-acid sequence, 418 residues long: MKVLVLGAGVAGVSSAWYLAEAGHEVTVIDRAEGVAMETSFANAGQLSYGYTTPWAAPGIPTKALKWLFKSHPPLLFRPDGSLYQIEWLWQMLQNCTAAHYQTNKERMVRISEYSREMFRRFEAQTGMNFEERKKGTLQIFRQTKEVEAAEQDIAVLERYGVPYRRLKPEECAEFEPALARVTAKIASGLHLPADATGDCRLFTENLYKLCQEKGVRFHFNQTISRIDHNGLRIKTVETETGRFEADAVVCALGCFSRTVLAQLDLNLPIYPVKGYSLTLPVTNSDGAPVSTVLDESYKVAITRFDNRIRVGGMAELSGYEIKLPEKRRETLALVVNDLFPEGGDLSQASFWSGLRPMTPDSTPLIGRTRFDNLFLNTGHGTLGWTMSLGSAKLTADIVSGKDTEIRSDDLSLSRYQA.

3–17 serves as a coordination point for FAD; it reads VLVLGAGVAGVSSAW.

It belongs to the DadA oxidoreductase family. FAD is required as a cofactor.

It catalyses the reaction a D-alpha-amino acid + A + H2O = a 2-oxocarboxylate + AH2 + NH4(+). Its pathway is amino-acid degradation; D-alanine degradation; NH(3) and pyruvate from D-alanine: step 1/1. Oxidative deamination of D-amino acids. This Neisseria meningitidis serogroup C (strain 053442) protein is D-amino acid dehydrogenase.